The following is a 331-amino-acid chain: Ribosomal RNA small subunit methyltransferase H (331 aa).

S-adenosyl-L-methionine-binding positions include 49-51, Asp68, Leu102, Asp116, and Gln123; that span reads GGH.

It belongs to the methyltransferase superfamily. RsmH family.

It is found in the cytoplasm. The enzyme catalyses cytidine(1402) in 16S rRNA + S-adenosyl-L-methionine = N(4)-methylcytidine(1402) in 16S rRNA + S-adenosyl-L-homocysteine + H(+). Functionally, specifically methylates the N4 position of cytidine in position 1402 (C1402) of 16S rRNA. In Renibacterium salmoninarum (strain ATCC 33209 / DSM 20767 / JCM 11484 / NBRC 15589 / NCIMB 2235), this protein is Ribosomal RNA small subunit methyltransferase H.